The sequence spans 362 residues: MTQELSFQKFIEQSDLLGELKYDFNEKDEFRHTETQRPFVFNYYENVLEKNSKRYQALGHLLEQYIYELLEKVCKLEKVYIPPEADKEEPRSFFFMSEKALTNHHSALLILLQDHGVFRAGQWSQQAIIHHGLQHGSQIPCIQMALQAHYDVIVLNPNDNFVEPKVEKEWKGLLTQNIESSSLKMVQGGSFFSLQHPPKCIPKRCSNTPEEHTAYIWDYFISKTEGKDIAFIVHGYGGLVFMDLLVRRRWEVMSKVYAVALIDSEHHVGHQLGSDVQLLAWIKHHCREWVTSPKPLDKPAATVFKKEFPMVSAGTEKYILAPSSSLQSIFKYFKKALKARTTINFSRMPIVTRSSTKRKQSA.

Residues 229–245 (IAFIVHGYGGLVFMDLL) form a helical membrane-spanning segment.

It belongs to the ARB2 family.

The protein localises to the membrane. This chain is Putative protein ARB2BP, found in Homo sapiens (Human).